Reading from the N-terminus, the 144-residue chain is Small ribosomal subunit protein uS12 (144 aa).

3-methylthioaspartic acid is present on aspartate 103. The tract at residues 125–144 is disordered; that stretch reads QQGRSRYGAKKGKAAPAKKK. Basic residues predominate over residues 131-144; it reads YGAKKGKAAPAKKK.

The protein belongs to the universal ribosomal protein uS12 family. Part of the 30S ribosomal subunit. Contacts proteins S8 and S17. May interact with IF1 in the 30S initiation complex.

Its function is as follows. With S4 and S5 plays an important role in translational accuracy. Functionally, interacts with and stabilizes bases of the 16S rRNA that are involved in tRNA selection in the A site and with the mRNA backbone. Located at the interface of the 30S and 50S subunits, it traverses the body of the 30S subunit contacting proteins on the other side and probably holding the rRNA structure together. The combined cluster of proteins S8, S12 and S17 appears to hold together the shoulder and platform of the 30S subunit. The protein is Small ribosomal subunit protein uS12 of Dehalococcoides mccartyi (strain ATCC BAA-2100 / JCM 16839 / KCTC 5957 / BAV1).